The sequence spans 1117 residues: Lid2 complex component snt2 (1117 aa).

Residues 89-208 form the BAH domain; it reads ELIQPNDFVL…QNINKVFDVV (120 aa). A Phorbol-ester/DAG-type zinc finger spans residues 227–282; sequence NYDFIVTEYGKGRALLNEPSNCKVCKKWCAFDFSVQCADCKKYYHMDCVVPPLLKK. The segment at 245 to 297 adopts a PHD-type 1 zinc-finger fold; it reads PSNCKVCKKWCAFDFSVQCADCKKYYHMDCVVPPLLKKPPHGFGWTCATCSFA. Residues 361-380 are disordered; it reads SSRNLHQQSRKSLDENKPNS. Residues 798 to 882 form a PHD-type 2 zinc finger; it reads KKCCALCGIV…SWACLSCRSN (85 aa). The C2HC pre-PHD-type zinc finger occupies 890–925; the sequence is DNHCVLCLQSASHSLMKKTVEGNWVHLICASWTPDV. A PHD-type 3; degenerate zinc finger spans residues 948–1002; it reads KKCEVCGNSFGVCVSSPNSGLTSHVTCAEKANWYLGFEFVKQDQSPFSMLSNLKS.

Component of the Lid2 complex composed of ash2, jmj3, lid2, sdc1 and snt2.

Its subcellular location is the nucleus. The chain is Lid2 complex component snt2 (snt2) from Schizosaccharomyces pombe (strain 972 / ATCC 24843) (Fission yeast).